The chain runs to 301 residues: Ornithine carbamoyltransferase (301 aa).

Carbamoyl phosphate contacts are provided by residues Arg-100 and 127 to 130 (HPCQ). L-ornithine contacts are provided by residues Asn-158, Asp-221, and 225–226 (SM). Carbamoyl phosphate is bound by residues Cys-260 and Arg-288.

The protein belongs to the aspartate/ornithine carbamoyltransferase superfamily. OTCase family. In terms of assembly, the enzyme is present as a mixture of trimers and dodecamers, with the relative proportions of the two forms depending on the salt concentration. In addition, the trimeric fraction could reassociate into dodecamers when the salt concentration is increased. It appears that in vivo, the main fraction is in the dodecameric form.

It is found in the cytoplasm. The enzyme catalyses carbamoyl phosphate + L-ornithine = L-citrulline + phosphate + H(+). Its pathway is amino-acid biosynthesis; L-arginine biosynthesis; L-arginine from L-ornithine and carbamoyl phosphate: step 1/3. Its activity is regulated as follows. Inhibited by excess of arginine and by the bisubstrate delta-N-phosphonoacetyl-L-ornithine (PALO). Reversibly catalyzes the transfer of the carbamoyl group from carbamoyl phosphate (CP) to the N(epsilon) atom of ornithine (ORN) to produce L-citrulline, which is a substrate for argininosuccinate synthetase, the enzyme involved in the final step in arginine biosynthesis. In Moritella abyssi, this protein is Ornithine carbamoyltransferase.